Consider the following 146-residue polypeptide: Stress-responsive DNAJB4-interacting membrane protein 1 (146 aa).

Positions 1–26 (MWPAPCSVGRLLIFFMCSSSGYVVQG) are cleaved as a signal peptide. The Extracellular segment spans residues 27–66 (CGPSPGARTTLGSPLSLWSIKTPSHIFCTRRAINLGFPSP). Residues 67 to 87 (PLVQLIFWSLNAGLDLYLCLI) traverse the membrane as a helical segment. Over 88–94 (SSCGFSQ) the chain is Cytoplasmic. Residues 95 to 115 (VFWPVEAFCSFSLSFFALALS) form a helical membrane-spanning segment. Residues 116–146 (HKFVICRLDQHIFSGFTKSLKNLPPCHRTDI) are Extracellular-facing.

Homodimer. Interacts with DNAJB4. Expressed in brain with higher detection in neurons than astrocytes. Decreased expression in Alzheimer brains. Detected at protein level in brain and cervix.

It localises to the membrane. In terms of biological role, promotes neuronal cells survival to stress conditions. This Homo sapiens (Human) protein is Stress-responsive DNAJB4-interacting membrane protein 1 (SDIM1).